The primary structure comprises 170 residues: E1B protein, small T-antigen (170 aa).

This sequence belongs to the adenoviridae E1B 19 kDa protein family.

This Canine adenovirus serotype 2 (CAdV-2) protein is E1B protein, small T-antigen.